We begin with the raw amino-acid sequence, 557 residues long: 2-isopropylmalate synthase (557 aa).

Residues P31–L304 form the Pyruvate carboxyltransferase domain. Residues D40, H243, H245, and N279 each coordinate Mg(2+). Residues I439–V557 form a regulatory domain region.

It belongs to the alpha-IPM synthase/homocitrate synthase family. LeuA type 2 subfamily. Homodimer. Requires Mg(2+) as cofactor.

It is found in the cytoplasm. It catalyses the reaction 3-methyl-2-oxobutanoate + acetyl-CoA + H2O = (2S)-2-isopropylmalate + CoA + H(+). Its pathway is amino-acid biosynthesis; L-leucine biosynthesis; L-leucine from 3-methyl-2-oxobutanoate: step 1/4. Catalyzes the condensation of the acetyl group of acetyl-CoA with 3-methyl-2-oxobutanoate (2-ketoisovalerate) to form 3-carboxy-3-hydroxy-4-methylpentanoate (2-isopropylmalate). This Desulfitobacterium hafniense (strain Y51) protein is 2-isopropylmalate synthase.